The primary structure comprises 465 residues: Cysteine--tRNA ligase (465 aa).

Zn(2+) is bound at residue C29. The 'HIGH' region motif lies at 31-41 (PTVYNYIHIGN). C209, H234, and E238 together coordinate Zn(2+). Residues 266–270 (KMSKS) carry the 'KMSKS' region motif. K269 lines the ATP pocket. Phosphoserine is present on S270.

The protein belongs to the class-I aminoacyl-tRNA synthetase family. Monomer. The cofactor is Zn(2+).

Its subcellular location is the cytoplasm. The enzyme catalyses tRNA(Cys) + L-cysteine + ATP = L-cysteinyl-tRNA(Cys) + AMP + diphosphate. The chain is Cysteine--tRNA ligase from Anoxybacillus flavithermus (strain DSM 21510 / WK1).